The primary structure comprises 485 residues: REST corepressor 1 (485 aa).

2 disordered regions span residues 1 to 26 (MPAM…ASAS) and 49 to 110 (AAAS…VGPQ). Low complexity-rich tracts occupy residues 49 to 64 (AAAS…AAAA) and 74 to 95 (AAAA…SGSS). Residues 78 to 257 (PNGNSSSNSW…RHARKQKRER (180 aa)) form an interaction with HDAC1 region. Residues 103–189 (GGMRVGPQYQ…KSLADLPNFT (87 aa)) enclose the ELM2 domain. Lys122 participates in a covalent cross-link: Glycyl lysine isopeptide (Lys-Gly) (interchain with G-Cter in SUMO2). Residue Ser127 is modified to Phosphoserine. The region spanning 190–241 (PFPDEWTVEDKVLFEQAFSFHGKTFHRIQQMLPDKSIASLVKFYYSWKKTRT) is the SANT 1 domain. Residues 244-273 (SVMDRHARKQKREREESEDELEEANGNNPI) adopt a coiled-coil conformation. A disordered region spans residues 244 to 314 (SVMDRHARKQ…AKNRAKRKPP (71 aa)). Phosphoserine is present on Ser260. The span at 278–288 (DQNKESKKEVP) shows a compositional bias: basic and acidic residues. An interaction with KDM1A region spans residues 296–384 (VKKEKHSTQA…LPEVIQKCNA (89 aa)). A Glycyl lysine isopeptide (Lys-Gly) (interchain with G-Cter in SUMO2) cross-link involves residue Lys297. Positions 334–369 (ATTVLRQLDMELVSVKRQIQNIKQTNSALKEKLDGG) form a coiled coil. The SANT 2 domain occupies 381 to 432 (KCNARWTTEEQLLAVQAIRKYGRDFQAISDVIGNKSVVQVKNFFVNYRRRFN). The disordered stretch occupies residues 442–485 (AEHGKEETNGPSNQKPVKSPDNSIKMPEEEDEAPVLDVRYASAS). Residues 450–463 (NGPSNQKPVKSPDN) are compositionally biased toward polar residues. Phosphoserine is present on Ser460. Lys466 is covalently cross-linked (Glycyl lysine isopeptide (Lys-Gly) (interchain with G-Cter in SUMO2)).

This sequence belongs to the CoREST family. In terms of assembly, interacts directly with GFI1 and GFI1B in a RCOR/GFI/KDM1A/HDAC complex. Interacts with INMS1. Component of a BHC histone deacetylase complex that contains HDAC1, HDAC2, HMG20B/BRAF35, KDM1A, RCOR1/CoREST and PHF21A/BHC80. The BHC complex may also contain ZMYM2, ZNF217, ZMYM3, GSE1 and GTF2I. Interacts with REST. Interacts with the SMARCE1/BAF57, suggesting that the BHC complex may recruit the ATP-dependent chromatin-remodeling SWI-SNF complex. Interacts with SOX2. (Microbial infection) Interacts with herpes virus HSV-1 ICP0 protein; the interaction leads to the disruption of the BHC complex, thereby preventing the BHC complex from repressing transcription of viral genes. Phosphorylated by HSV-1 protein kinases in case of infection. As to expression, ubiquitously expressed.

It localises to the nucleus. In terms of biological role, essential component of the BHC complex, a corepressor complex that represses transcription of neuron-specific genes in non-neuronal cells. The BHC complex is recruited at RE1/NRSE sites by REST and acts by deacetylating and demethylating specific sites on histones, thereby acting as a chromatin modifier. In the BHC complex, it serves as a molecular beacon for the recruitment of molecular machinery, including MeCP2 and SUV39H1, that imposes silencing across a chromosomal interval. Plays a central role in demethylation of Lys-4 of histone H3 by promoting demethylase activity of KDM1A on core histones and nucleosomal substrates. It also protects KDM1A from the proteasome. Component of a RCOR/GFI/KDM1A/HDAC complex that suppresses, via histone deacetylase (HDAC) recruitment, a number of genes implicated in multilineage blood cell development and controls hematopoietic differentiation. This is REST corepressor 1 (RCOR1) from Homo sapiens (Human).